The sequence spans 541 residues: Tegument protein UL21 homolog (541 aa).

The protein belongs to the alphaherpesvirinae UL21 protein family. Interacts (via C-terminus) with UL16.

Its subcellular location is the virion tegument. The protein resides in the host cytoplasm. It localises to the host nucleus. In terms of biological role, may participate in DNA packaging/capsid maturation events. Promotes efficient incorporation of tegument proteins UL46, UL49, and US3 homologs into virions. May also play a role in capsid transport to the trans-Golgi network (TGN). The protein is Tegument protein UL21 homolog of Homo sapiens (Human).